We begin with the raw amino-acid sequence, 561 residues long: Lysine--tRNA ligase (561 aa).

Residues E409 and E416 each contribute to the Mg(2+) site.

The protein belongs to the class-II aminoacyl-tRNA synthetase family. As to quaternary structure, homodimer. Requires Mg(2+) as cofactor.

Its subcellular location is the cytoplasm. The enzyme catalyses tRNA(Lys) + L-lysine + ATP = L-lysyl-tRNA(Lys) + AMP + diphosphate. The polypeptide is Lysine--tRNA ligase (Nostoc sp. (strain PCC 7120 / SAG 25.82 / UTEX 2576)).